The chain runs to 273 residues: SUMO-1 cysteine protease S273R (273 aa).

Residues histidine 168 and asparagine 187 contribute to the active site. Glutamine 226 is a substrate binding site. Cysteine 232 acts as the Nucleophile in catalysis.

It belongs to the peptidase C63 family.

Its subcellular location is the host cytoplasm. It localises to the virion. Functionally, cysteine protease that plays several role during infection including processing of the structural polyprotein or inhibition of the host immune response. Catalyzes the maturation of the pp220 and pp62 polyprotein precursors into core-shell proteins. Plays a role in the disruption of host pyroptosis via specific cleavage of gasdermin D/GSDMD. In addition, strongly decreases the host cGAS-STING signaling by targeting IKBKE via its enzymatic activity. Also impairs host FOXJ1-mediated antiviral effect via degradation of FOXJ1. This is SUMO-1 cysteine protease S273R from Ornithodoros (relapsing fever ticks).